A 118-amino-acid polypeptide reads, in one-letter code: NADPH-dependent 7-cyano-7-deazaguanine reductase (118 aa).

The active-site Thioimide intermediate is C31. The active-site Proton donor is D38. Residues 53 to 55 (IEL) and 72 to 73 (YE) each bind substrate.

The protein belongs to the GTP cyclohydrolase I family. QueF type 1 subfamily.

The protein localises to the cytoplasm. It carries out the reaction 7-aminomethyl-7-carbaguanine + 2 NADP(+) = 7-cyano-7-deazaguanine + 2 NADPH + 3 H(+). Its pathway is tRNA modification; tRNA-queuosine biosynthesis. Functionally, catalyzes the NADPH-dependent reduction of 7-cyano-7-deazaguanine (preQ0) to 7-aminomethyl-7-deazaguanine (preQ1). This chain is NADPH-dependent 7-cyano-7-deazaguanine reductase, found in Prosthecochloris aestuarii (strain DSM 271 / SK 413).